A 358-amino-acid chain; its full sequence is GTPase Obg (358 aa).

The 159-residue stretch at 1 to 159 (MKFLDEAKVY…RWIWLRLKLI (159 aa)) folds into the Obg domain. One can recognise an OBG-type G domain in the interval 160 to 327 (ADAGLVGLPN…VLRALVEVIG (168 aa)). Residues 166-173 (GLPNAGKS), 191-195 (FTTLH), 212-215 (DIPG), 279-282 (NKID), and 308-310 (SGV) contribute to the GTP site. 2 residues coordinate Mg(2+): serine 173 and threonine 193. A disordered region spans residues 335-358 (AKGADASAAQAMETPVARAKPWSP).

The protein belongs to the TRAFAC class OBG-HflX-like GTPase superfamily. OBG GTPase family. As to quaternary structure, monomer. Mg(2+) serves as cofactor.

It is found in the cytoplasm. Functionally, an essential GTPase which binds GTP, GDP and possibly (p)ppGpp with moderate affinity, with high nucleotide exchange rates and a fairly low GTP hydrolysis rate. Plays a role in control of the cell cycle, stress response, ribosome biogenesis and in those bacteria that undergo differentiation, in morphogenesis control. The polypeptide is GTPase Obg (Nitrobacter winogradskyi (strain ATCC 25391 / DSM 10237 / CIP 104748 / NCIMB 11846 / Nb-255)).